Reading from the N-terminus, the 463-residue chain is Lipase 5 (463 aa).

An N-terminal signal peptide occupies residues 1-14 (MLYLILFLIAPIYA). Cysteine 110 and cysteine 281 are oxidised to a cystine. Catalysis depends on serine 194, which acts as the Charge relay system. N-linked (GlcNAc...) asparagine glycosylation occurs at asparagine 229. Catalysis depends on charge relay system residues aspartate 343 and histidine 376. An intrachain disulfide couples cysteine 359 to cysteine 404.

The protein belongs to the AB hydrolase superfamily. Lipase family. Class Lip subfamily.

Its subcellular location is the secreted. It carries out the reaction a triacylglycerol + H2O = a diacylglycerol + a fatty acid + H(+). Fe(2)+, Fe(3+), Hg(2+) as well as ethylenediaminetetraacetic acid (EDTA) and phenylmethanesulfonyl fluoride (PMSF) strongly inhibit the lipase activity. Surfactants such as Tween 20, Tween 80 and TritonX-100 show also inhibitory effect in the lipase activity. Sodium dodecyl sulfate (SDS) sharply decreases the lipase activity by 85%. Methanol, ethanol, and acetone have also negative effect on the lipase activity, with residual activities at 48%, 24% and 44% respectively. Finally, lipase activity is almost lost in the presence of isopropanol alcohol. In terms of biological role, secreted lipase that is able to hydrolyze both the neutral triacylglycerols and the monopalmitate ester Tween 40, allowing the use of hydrolyzed products as carbon sources. Exhibits a preference for the short and medium chain length p-NP (C4 and C8 acyl group) esters rather than the long chain length p-NP esters (C12, C16 and C18 acyl group). Has broad lipolytic activity, which may be important for colonization and subsequent infection, therefore contributing to the persistence and virulence in human tissue. This is Lipase 5 from Candida albicans (strain SC5314 / ATCC MYA-2876) (Yeast).